Here is a 1034-residue protein sequence, read N- to C-terminus: Phosphoenolpyruvate carboxylase (1034 aa).

Residues H203 and K680 contribute to the active site.

The protein belongs to the PEPCase type 1 family. The cofactor is Mg(2+).

It carries out the reaction oxaloacetate + phosphate = phosphoenolpyruvate + hydrogencarbonate. In terms of biological role, forms oxaloacetate, a four-carbon dicarboxylic acid source for the tricarboxylic acid cycle. This Synechocystis sp. (strain ATCC 27184 / PCC 6803 / Kazusa) protein is Phosphoenolpyruvate carboxylase (ppc).